An 87-amino-acid polypeptide reads, in one-letter code: Small ribosomal subunit protein uS15c (87 aa).

It belongs to the universal ribosomal protein uS15 family. As to quaternary structure, part of the 30S ribosomal subunit.

The protein resides in the plastid. Its subcellular location is the chloroplast. This is Small ribosomal subunit protein uS15c (rps15) from Atropa belladonna (Belladonna).